The primary structure comprises 733 residues: MATKFPKFSQALAQDPATRRIWYGIATAHDLEAHDGMTEENLYQKIFASHFGHLAIIFLWTSGNLFHVAWQGNFEKWVSNPLKTRPIAHSIWDPHFGESALKAFSKGNTYPVNITFSGLYQWWYTIGFRTNQELYKGSIGLLLLASVLLIAGWLHLQPKFRPSLSWFKNNESRLNHHLSGLLGFSSLAWTGHLVHVAIPASRGVHVGWDNFLTTPPHPAGLTPFFTGNWTVYAENPDSATHVFNTSEGSGTAILTFLGGFHPQTQSLWLSDMAHHHLAIAVVFIVAGHMYRTNFGIGHNMKEILDAHRPPGGRLGAGHVGLFETITNSLHMQLGLALACLGVATSLTAQHMYALTPYAYLSKDFTTEAALYTHHQYIAGFLMVGAFAHGAIFFVRDYDPELNKNNVLARMLEHKEAIISHLSWASLFLGFHTLGLYIHNDTVVAFGQPEKQILFEPLFAEYIQAASGKAVYQFNVLLASSTSPATAAGNQVWLPGWLEAINNPKTDLFLKIGPGDFLVHHAIALGLHVTALILVKGALDARGSKLMPDKKDFGYSFPCDGPGRGGTCDISAWDAFYLAMFWMLNTIGWVTFYWHWKHMTIWGGNPGQFDESSNYIMGWLRDYLWLNSSPLINGYNPFGMNNLSVWSWMFLFGHLIWATGFMFLISWRGYWQELIETLVWAHERTPLANLIRWRDKPVALSIVQARLVGLVHFSVGYILTYAAFVIASTSGKFA.

The next 8 helical transmembrane spans lie at 46–69 (IFAS…FHVA), 134–157 (LYKG…LHLQ), 174–198 (LNHH…HVAI), 272–290 (MAHH…GHMY), 329–352 (LHMQ…QHMY), 368–394 (AALY…IFFV), 416–438 (AIIS…LYIH), and 516–534 (FLVH…LILV). The [4Fe-4S] cluster site is built by cysteine 558 and cysteine 567. 2 consecutive transmembrane segments (helical) span residues 574–595 (AFYL…YWHW) and 642–664 (LSVW…MFLI). 3 residues coordinate chlorophyll a: histidine 653, methionine 661, and tyrosine 669. Tryptophan 670 contacts phylloquinone. The helical transmembrane segment at 706-726 (LVGLVHFSVGYILTYAAFVIA) threads the bilayer.

Belongs to the PsaA/PsaB family. The PsaA/B heterodimer binds the P700 chlorophyll special pair and subsequent electron acceptors. PSI consists of a core antenna complex that captures photons, and an electron transfer chain that converts photonic excitation into a charge separation. The eukaryotic PSI reaction center is composed of at least 11 subunits. Requires P700 is a chlorophyll a/chlorophyll a' dimer, A0 is one or more chlorophyll a, A1 is one or both phylloquinones and FX is a shared 4Fe-4S iron-sulfur center. as cofactor.

It localises to the plastid. Its subcellular location is the chloroplast thylakoid membrane. It catalyses the reaction reduced [plastocyanin] + hnu + oxidized [2Fe-2S]-[ferredoxin] = oxidized [plastocyanin] + reduced [2Fe-2S]-[ferredoxin]. In terms of biological role, psaA and PsaB bind P700, the primary electron donor of photosystem I (PSI), as well as the electron acceptors A0, A1 and FX. PSI is a plastocyanin/cytochrome c6-ferredoxin oxidoreductase, converting photonic excitation into a charge separation, which transfers an electron from the donor P700 chlorophyll pair to the spectroscopically characterized acceptors A0, A1, FX, FA and FB in turn. Oxidized P700 is reduced on the lumenal side of the thylakoid membrane by plastocyanin or cytochrome c6. In Thalassiosira pseudonana (Marine diatom), this protein is Photosystem I P700 chlorophyll a apoprotein A2.